Consider the following 433-residue polypeptide: tRNA-2-methylthio-N(6)-dimethylallyladenosine synthase (433 aa).

Residues 4 to 119 enclose the MTTase N-terminal domain; sequence KKLFIQTLGC…ITQAIKTPKF (116 aa). [4Fe-4S] cluster is bound by residues Cys-13, Cys-50, Cys-82, Cys-151, Cys-155, and Cys-158. One can recognise a Radical SAM core domain in the interval 137-370; that stretch reads RNSIYKSYIN…QNRHSEILDE (234 aa). The 61-residue stretch at 373–433 folds into the TRAM domain; that stretch reads KKQENKTFKV…KRMVLYGEII (61 aa).

The protein belongs to the methylthiotransferase family. MiaB subfamily. Monomer. [4Fe-4S] cluster is required as a cofactor.

The protein localises to the cytoplasm. The catalysed reaction is N(6)-dimethylallyladenosine(37) in tRNA + (sulfur carrier)-SH + AH2 + 2 S-adenosyl-L-methionine = 2-methylsulfanyl-N(6)-dimethylallyladenosine(37) in tRNA + (sulfur carrier)-H + 5'-deoxyadenosine + L-methionine + A + S-adenosyl-L-homocysteine + 2 H(+). In terms of biological role, catalyzes the methylthiolation of N6-(dimethylallyl)adenosine (i(6)A), leading to the formation of 2-methylthio-N6-(dimethylallyl)adenosine (ms(2)i(6)A) at position 37 in tRNAs that read codons beginning with uridine. The chain is tRNA-2-methylthio-N(6)-dimethylallyladenosine synthase from Campylobacter jejuni subsp. doylei (strain ATCC BAA-1458 / RM4099 / 269.97).